We begin with the raw amino-acid sequence, 248 residues long: tRNA uridine(34) hydroxylase (248 aa).

In terms of domain architecture, Rhodanese spans E128–Y222. The active-site Cysteine persulfide intermediate is C182.

It belongs to the TrhO family.

It catalyses the reaction uridine(34) in tRNA + AH2 + O2 = 5-hydroxyuridine(34) in tRNA + A + H2O. Its function is as follows. Catalyzes oxygen-dependent 5-hydroxyuridine (ho5U) modification at position 34 in tRNAs. In Thiobacillus denitrificans (strain ATCC 25259 / T1), this protein is tRNA uridine(34) hydroxylase.